We begin with the raw amino-acid sequence, 450 residues long: Pancreatic triacylglycerol lipase (450 aa).

Intrachain disulfides connect Cys4–Cys10, Cys91–Cys102, and Cys91–Cys104. The active-site Nucleophile is the Ser153. N-linked (GlcNAc...) asparagine glycosylation is present at Asn167. Residue Asp177 is the Charge relay system of the active site. 4 residues coordinate Ca(2+): Glu188, Arg191, Asp193, and Asp196. An intrachain disulfide couples Cys238 to Cys262. His264 (charge relay system) is an active-site residue. Disulfide bonds link Cys286–Cys297, Cys300–Cys305, and Cys434–Cys450. Residues 339 to 450 (WRYKVSVTLS…EEVLLTLNPC (112 aa)) form the PLAT domain.

Belongs to the AB hydrolase superfamily. Lipase family. In terms of assembly, forms a 1:1 stoichiometric complex with (pro)colipase/CLPS.

It localises to the secreted. The catalysed reaction is a triacylglycerol + H2O = a diacylglycerol + a fatty acid + H(+). It carries out the reaction 1,2,3-tributanoylglycerol + H2O = dibutanoylglycerol + butanoate + H(+). The enzyme catalyses 1,2,3-tri-(9Z-octadecenoyl)-glycerol + H2O = di-(9Z)-octadecenoylglycerol + (9Z)-octadecenoate + H(+). It catalyses the reaction all-trans-retinyl hexadecanoate + H2O = all-trans-retinol + hexadecanoate + H(+). The catalysed reaction is 1,2-di-(9Z-octadecenoyl)-glycerol + H2O = (9Z-octadecenoyl)-glycerol + (9Z)-octadecenoate + H(+). With respect to regulation, inhibited by bile salts, is reactivated by (pro)colipase/CLPS. Functionally, plays an important role in fat metabolism. It preferentially splits the esters of long-chain fatty acids at positions 1 and 3, producing mainly 2-monoacylglycerol and free fatty acids, and shows considerably higher activity against insoluble emulsified substrates than against soluble ones. This Sus scrofa (Pig) protein is Pancreatic triacylglycerol lipase (PNLIP).